The chain runs to 491 residues: Protein nucleotidyltransferase YdiU (491 aa).

Positions 88, 90, 91, 111, 123, 124, 174, and 181 each coordinate ATP. Aspartate 250 acts as the Proton acceptor in catalysis. Residues asparagine 251 and aspartate 260 each contribute to the Mg(2+) site. ATP is bound at residue aspartate 260.

This sequence belongs to the SELO family. Mg(2+) is required as a cofactor. It depends on Mn(2+) as a cofactor.

The enzyme catalyses L-seryl-[protein] + ATP = 3-O-(5'-adenylyl)-L-seryl-[protein] + diphosphate. It catalyses the reaction L-threonyl-[protein] + ATP = 3-O-(5'-adenylyl)-L-threonyl-[protein] + diphosphate. It carries out the reaction L-tyrosyl-[protein] + ATP = O-(5'-adenylyl)-L-tyrosyl-[protein] + diphosphate. The catalysed reaction is L-histidyl-[protein] + UTP = N(tele)-(5'-uridylyl)-L-histidyl-[protein] + diphosphate. The enzyme catalyses L-seryl-[protein] + UTP = O-(5'-uridylyl)-L-seryl-[protein] + diphosphate. It catalyses the reaction L-tyrosyl-[protein] + UTP = O-(5'-uridylyl)-L-tyrosyl-[protein] + diphosphate. Nucleotidyltransferase involved in the post-translational modification of proteins. It can catalyze the addition of adenosine monophosphate (AMP) or uridine monophosphate (UMP) to a protein, resulting in modifications known as AMPylation and UMPylation. This Rhodopseudomonas palustris (strain BisB18) protein is Protein nucleotidyltransferase YdiU.